The primary structure comprises 529 residues: uncharacterized protein (529 aa).

Residues 178-186 (TSGTTGQPK), D401, R416, and K510 contribute to the ATP site.

This sequence belongs to the ATP-dependent AMP-binding enzyme family.

This is an uncharacterized protein from Bacillus subtilis (strain 168).